Here is a 369-residue protein sequence, read N- to C-terminus: Uroporphyrinogen decarboxylase (369 aa).

Substrate-binding positions include 28–32 (RQAGR), Asp78, Tyr154, Ser209, and His339.

This sequence belongs to the uroporphyrinogen decarboxylase family. In terms of assembly, homodimer.

The protein resides in the cytoplasm. It catalyses the reaction uroporphyrinogen III + 4 H(+) = coproporphyrinogen III + 4 CO2. It participates in porphyrin-containing compound metabolism; protoporphyrin-IX biosynthesis; coproporphyrinogen-III from 5-aminolevulinate: step 4/4. Its function is as follows. Catalyzes the decarboxylation of four acetate groups of uroporphyrinogen-III to yield coproporphyrinogen-III. In Polaromonas naphthalenivorans (strain CJ2), this protein is Uroporphyrinogen decarboxylase.